The following is a 474-amino-acid chain: Glycogen synthase (474 aa).

Lysine 15 provides a ligand contact to ADP-alpha-D-glucose.

Belongs to the glycosyltransferase 1 family. Bacterial/plant glycogen synthase subfamily.

The enzyme catalyses [(1-&gt;4)-alpha-D-glucosyl](n) + ADP-alpha-D-glucose = [(1-&gt;4)-alpha-D-glucosyl](n+1) + ADP + H(+). It participates in glycan biosynthesis; glycogen biosynthesis. In terms of biological role, synthesizes alpha-1,4-glucan chains using ADP-glucose. The sequence is that of Glycogen synthase from Chlamydia trachomatis serovar A (strain ATCC VR-571B / DSM 19440 / HAR-13).